Consider the following 236-residue polypeptide: Small ribosomal subunit protein uS3 (236 aa).

The 69-residue stretch at 39–107 (IRSYVLEELR…ETSLNIVEIR (69 aa)) folds into the KH type-2 domain. A disordered region spans residues 214–236 (ASERRATEADQSGSSSNRRRENA).

Belongs to the universal ribosomal protein uS3 family. In terms of assembly, part of the 30S ribosomal subunit. Forms a tight complex with proteins S10 and S14.

Its function is as follows. Binds the lower part of the 30S subunit head. Binds mRNA in the 70S ribosome, positioning it for translation. This chain is Small ribosomal subunit protein uS3, found in Bartonella tribocorum (strain CIP 105476 / IBS 506).